Reading from the N-terminus, the 202-residue chain is FMN-dependent NADH:quinone oxidoreductase (202 aa).

Residues Ser9, 15-17, 95-98, and 139-142 each bind FMN; these read SVS, MYNF, and SRGG.

Belongs to the azoreductase type 1 family. Homodimer. It depends on FMN as a cofactor.

It carries out the reaction 2 a quinone + NADH + H(+) = 2 a 1,4-benzosemiquinone + NAD(+). The catalysed reaction is N,N-dimethyl-1,4-phenylenediamine + anthranilate + 2 NAD(+) = 2-(4-dimethylaminophenyl)diazenylbenzoate + 2 NADH + 2 H(+). Functionally, quinone reductase that provides resistance to thiol-specific stress caused by electrophilic quinones. In terms of biological role, also exhibits azoreductase activity. Catalyzes the reductive cleavage of the azo bond in aromatic azo compounds to the corresponding amines. The chain is FMN-dependent NADH:quinone oxidoreductase from Laribacter hongkongensis (strain HLHK9).